A 72-amino-acid polypeptide reads, in one-letter code: Translation initiation factor IF-1 (72 aa).

An S1-like domain is found at 1 to 72; that stretch reads MSKDDVIEMQ…TRGRITWRAK (72 aa).

Belongs to the IF-1 family. As to quaternary structure, component of the 30S ribosomal translation pre-initiation complex which assembles on the 30S ribosome in the order IF-2 and IF-3, IF-1 and N-formylmethionyl-tRNA(fMet); mRNA recruitment can occur at any time during PIC assembly.

The protein resides in the cytoplasm. Its function is as follows. One of the essential components for the initiation of protein synthesis. Stabilizes the binding of IF-2 and IF-3 on the 30S subunit to which N-formylmethionyl-tRNA(fMet) subsequently binds. Helps modulate mRNA selection, yielding the 30S pre-initiation complex (PIC). Upon addition of the 50S ribosomal subunit IF-1, IF-2 and IF-3 are released leaving the mature 70S translation initiation complex. In Clostridium botulinum (strain ATCC 19397 / Type A), this protein is Translation initiation factor IF-1.